Here is a 619-residue protein sequence, read N- to C-terminus: MSLDIAKYPTLALAENPEELRMLPKESLPKLCDELRQYLLTCVSRSSGHFASGLGVVELTVALHYVYNTPFDHLIWDVGHQAYPHKILTGRRDRISTIRQKDGLHPFPWRGESEYDVLSVGHSSTSISAGLGMAVAAEREGKGRRTVCVIGDGAITAGMAFEAMSHAGDIHSDMLVILNDNEMSISENVGGLNNHLAQLLSGKLYASLREGGKKAFSALPPIKDLLKRTEEHLKGMVVPSTLFEELGFNYIGPVDGHDVHTLTQTLKNMRDLKGPQLLHIMTKKGKGYAPAEKDPIGWHAVPKFDPASGTLPKSQSSLPTYSKIFGEWLCETAAKDSKLMAVTPAMREGSGMVRFSREYPQQYFDVAIAEQHAVTFAAGLAIGGYKPVVAIYSTFLQRAYDQLIHDVAIQNLPVLFAIDRGGLVGADGQTHQGAFDLSFMRCIPNMVIMAPSDENECRQMLYTGYHHNGPAAVRYPRGNGTGAVLEPLEMLPIGKGVLRREGEKIAILCFGTLLAQAQLAAENLNATLVDMRFVKPLDEELVLEMAAKHQVLVTVEENAIMGGAGSGVNELLMAKRRWVPVLNIGLPDLFVPQGEQDEMRSELGLDAAGIQRQIEAWLA.

Thiamine diphosphate is bound by residues His80 and 121–123; that span reads GHS. Mg(2+) is bound at residue Asp152. Thiamine diphosphate contacts are provided by residues 153–154, Asn181, Tyr288, and Glu370; that span reads GA. Residue Asn181 participates in Mg(2+) binding.

The protein belongs to the transketolase family. DXPS subfamily. Homodimer. Mg(2+) serves as cofactor. Thiamine diphosphate is required as a cofactor.

The catalysed reaction is D-glyceraldehyde 3-phosphate + pyruvate + H(+) = 1-deoxy-D-xylulose 5-phosphate + CO2. Its pathway is metabolic intermediate biosynthesis; 1-deoxy-D-xylulose 5-phosphate biosynthesis; 1-deoxy-D-xylulose 5-phosphate from D-glyceraldehyde 3-phosphate and pyruvate: step 1/1. In terms of biological role, catalyzes the acyloin condensation reaction between C atoms 2 and 3 of pyruvate and glyceraldehyde 3-phosphate to yield 1-deoxy-D-xylulose-5-phosphate (DXP). This chain is 1-deoxy-D-xylulose-5-phosphate synthase, found in Yersinia pseudotuberculosis serotype I (strain IP32953).